Consider the following 81-residue polypeptide: U12-hexatoxin-Mg1a (81 aa).

The signal sequence occupies residues 1 to 24 (MKAPATIVILIMSLISVLWATADT). Positions 25-50 (EDGNLLFPIEDFIRKFDEYPVQPKER) are excised as a propeptide. 3 disulfides stabilise this stretch: Cys52/Cys66, Cys59/Cys71, and Cys65/Cys75. At Pro78 the chain carries Proline amide.

Expressed by the venom gland.

It is found in the secreted. In terms of biological role, blocks voltage-gated sodium channels (Nav). Intracranial injection into mice causes lacrimation, slow breathing and death. Intrathorax injection into crickets causes death. The chain is U12-hexatoxin-Mg1a from Macrothele gigas (Japanese funnel web spider).